The chain runs to 144 residues: Large ribosomal subunit protein uL15 (144 aa).

The tract at residues 1-57 (MRLNTLSPAAGSKHAPKRVGRGIGSGLGKTGGRGHKGQKSRSGGKVRPGFEGGQMPL) is disordered. A compositionally biased stretch (gly residues) spans 21 to 31 (RGIGSGLGKTG). Over residues 32 to 44 (GRGHKGQKSRSGG) the composition is skewed to basic residues.

It belongs to the universal ribosomal protein uL15 family. Part of the 50S ribosomal subunit.

In terms of biological role, binds to the 23S rRNA. This chain is Large ribosomal subunit protein uL15, found in Vibrio vulnificus (strain CMCP6).